A 276-amino-acid polypeptide reads, in one-letter code: Elongation factor Ts (276 aa).

An involved in Mg(2+) ion dislocation from EF-Tu region spans residues 79-82; that stretch reads TDFV.

The protein belongs to the EF-Ts family.

The protein resides in the cytoplasm. In terms of biological role, associates with the EF-Tu.GDP complex and induces the exchange of GDP to GTP. It remains bound to the aminoacyl-tRNA.EF-Tu.GTP complex up to the GTP hydrolysis stage on the ribosome. The protein is Elongation factor Ts of Buchnera aphidicola subsp. Cinara cedri (strain Cc).